We begin with the raw amino-acid sequence, 333 residues long: F420-dependent glucose-6-phosphate dehydrogenase (333 aa).

Asp-37 provides a ligand contact to coenzyme F420-(gamma-Glu)n. The Proton donor role is filled by His-38. Coenzyme F420-(gamma-Glu)n is bound by residues Thr-74 and 105–106; that span reads SG. Residue Glu-107 is the Proton acceptor of the active site. Coenzyme F420-(gamma-Glu)n contacts are provided by residues Asn-110, 174 to 175, and 177 to 178; these read GG and VV. The substrate site is built by Thr-192, Lys-195, Lys-256, and Arg-280.

It belongs to the F420-dependent glucose-6-phosphate dehydrogenase family. Homodimer.

It catalyses the reaction oxidized coenzyme F420-(gamma-L-Glu)(n) + D-glucose 6-phosphate + H(+) = 6-phospho-D-glucono-1,5-lactone + reduced coenzyme F420-(gamma-L-Glu)(n). In terms of biological role, catalyzes the coenzyme F420-dependent oxidation of glucose 6-phosphate (G6P) to 6-phosphogluconolactone. The polypeptide is F420-dependent glucose-6-phosphate dehydrogenase (Amycolatopsis mediterranei (strain U-32)).